A 388-amino-acid polypeptide reads, in one-letter code: Chorismate synthase (388 aa).

NADP(+) contacts are provided by R39 and R45. Residues 130–132 (RSS), 251–252 (NA), G296, 311–315 (KPIPT), and R337 contribute to the FMN site.

This sequence belongs to the chorismate synthase family. Homotetramer. It depends on FMNH2 as a cofactor.

It carries out the reaction 5-O-(1-carboxyvinyl)-3-phosphoshikimate = chorismate + phosphate. The protein operates within metabolic intermediate biosynthesis; chorismate biosynthesis; chorismate from D-erythrose 4-phosphate and phosphoenolpyruvate: step 7/7. Functionally, catalyzes the anti-1,4-elimination of the C-3 phosphate and the C-6 proR hydrogen from 5-enolpyruvylshikimate-3-phosphate (EPSP) to yield chorismate, which is the branch point compound that serves as the starting substrate for the three terminal pathways of aromatic amino acid biosynthesis. This reaction introduces a second double bond into the aromatic ring system. This Streptococcus pneumoniae (strain ATCC 700669 / Spain 23F-1) protein is Chorismate synthase.